Here is a 635-residue protein sequence, read N- to C-terminus: Probable extracellular metalloproteinase 1 (635 aa).

Residues 1-19 form the signal peptide; it reads MHGLLLAAGLLSLPLHVLA. Residues 20–246 constitute a propeptide that is removed on maturation; it reads HPQPSTSTSL…VHNVVDYVAH (227 aa). N-linked (GlcNAc...) asparagine glycosylation is present at N287. H430 is a Zn(2+) binding site. E431 is a catalytic residue. H434 contributes to the Zn(2+) binding site. 3 N-linked (GlcNAc...) asparagine glycosylation sites follow: N475, N594, and N623.

The protein belongs to the peptidase M36 family. The cofactor is Zn(2+).

The protein localises to the secreted. In terms of biological role, secreted metalloproteinase probably acting as a virulence factor. This Arthroderma benhamiae (strain ATCC MYA-4681 / CBS 112371) (Trichophyton mentagrophytes) protein is Probable extracellular metalloproteinase 1 (MEP1).